We begin with the raw amino-acid sequence, 181 residues long: Inner membrane-spanning protein YciB (181 aa).

The next 5 membrane-spanning stretches (helical) occupy residues 10 to 30, 50 to 70, 72 to 92, 118 to 138, and 148 to 168; these read LIIF…GALI, MHLI…VFHD, AFIK…LGVS, VTWY…YVAF, and FKVF…VFYL.

The protein belongs to the YciB family.

Its subcellular location is the cell inner membrane. Its function is as follows. Plays a role in cell envelope biogenesis, maintenance of cell envelope integrity and membrane homeostasis. The polypeptide is Inner membrane-spanning protein YciB (Shewanella sp. (strain ANA-3)).